The following is a 2472-amino-acid chain: Highly reducing polyketide synthase xilA (2472 aa).

Residues methionine 1 to aspartate 417 enclose the Ketosynthase family 3 (KS3) domain. Active-site for beta-ketoacyl synthase activity residues include cysteine 162, histidine 298, and histidine 340. Residues asparagine 442–aspartate 502 are disordered. A compositionally biased stretch (low complexity) spans threonine 450–asparagine 489. In terms of domain architecture, Malonyl-CoA:ACP transacylase (MAT) spans phenylalanine 597–valine 932. The segment at histidine 991–phenylalanine 1129 is N-terminal hotdog fold. Residues histidine 991–serine 1294 enclose the PKS/mFAS DH domain. The active-site Proton acceptor; for dehydratase activity is histidine 1023. Positions glycine 1141 to serine 1294 are C-terminal hotdog fold. Catalysis depends on aspartate 1207, which acts as the Proton donor; for dehydratase activity. The segment at asparagine 1289 to isoleucine 1505 is methyltransferase (CMeT) domain. The Enoyl reductase (ER) domain maps to glycine 1724–isoleucine 2036. Residues alanine 2060–lysine 2239 form the Ketoreductase (KR) domain. Residues glutamate 2391–alanine 2469 form the Carrier domain. Serine 2428 bears the O-(pantetheine 4'-phosphoryl)serine mark.

The cofactor is pantetheine 4'-phosphate.

It participates in secondary metabolite biosynthesis. In terms of biological role, highly reducing polyketide synthase; part of the gene cluster that mediates the biosynthesis of the 6-methyl-2-pyrone derivative xylariolide D. XilA produces the 5-alkyl-6-methyl-2-pyrone backbone called prexylariolide D via sequential condensations of 4 malonyl-CoA units with one acetyl-CoA starter unit. During the biosynthesis, the linear polyketide chain is branched by the addition of an acetyl unit as the origin of the methyl group at the 2-pyrone ring. Prexylariolide D is then hydroxylated at the side chain by xilC to form the final product, xylariolide D. The protein is Highly reducing polyketide synthase xilA of Penicillium crustosum (Blue mold fungus).